A 481-amino-acid chain; its full sequence is Bifunctional protein GlmU (481 aa).

The tract at residues 1–235 is pyrophosphorylase; it reads MTHKERPLDV…PDEVMGANDR (235 aa). UDP-N-acetyl-alpha-D-glucosamine contacts are provided by residues 13–16, Lys-27, Gln-78, 83–84, 107–109, Gly-146, Glu-161, Asn-176, and Asn-233; these read LAAG, GT, and YGD. Mg(2+) is bound at residue Asp-109. Mg(2+) is bound at residue Asn-233. The segment at 236-256 is linker; the sequence is VQLAQAAAVLRRRINTAHMQA. Residues 257–481 form an N-acetyltransferase region; it reads GVTLQDPSTI…PWLAGWLERQ (225 aa). UDP-N-acetyl-alpha-D-glucosamine-binding residues include Arg-339 and Lys-357. The active-site Proton acceptor is His-369. 2 residues coordinate UDP-N-acetyl-alpha-D-glucosamine: Tyr-372 and Asn-383. Positions 386, 411, 429, and 446 each coordinate acetyl-CoA.

In the N-terminal section; belongs to the N-acetylglucosamine-1-phosphate uridyltransferase family. The protein in the C-terminal section; belongs to the transferase hexapeptide repeat family. As to quaternary structure, homotrimer. It depends on Mg(2+) as a cofactor.

The protein localises to the cytoplasm. The enzyme catalyses alpha-D-glucosamine 1-phosphate + acetyl-CoA = N-acetyl-alpha-D-glucosamine 1-phosphate + CoA + H(+). It catalyses the reaction N-acetyl-alpha-D-glucosamine 1-phosphate + UTP + H(+) = UDP-N-acetyl-alpha-D-glucosamine + diphosphate. It functions in the pathway nucleotide-sugar biosynthesis; UDP-N-acetyl-alpha-D-glucosamine biosynthesis; N-acetyl-alpha-D-glucosamine 1-phosphate from alpha-D-glucosamine 6-phosphate (route II): step 2/2. The protein operates within nucleotide-sugar biosynthesis; UDP-N-acetyl-alpha-D-glucosamine biosynthesis; UDP-N-acetyl-alpha-D-glucosamine from N-acetyl-alpha-D-glucosamine 1-phosphate: step 1/1. It participates in bacterial outer membrane biogenesis; LPS lipid A biosynthesis. Functionally, catalyzes the last two sequential reactions in the de novo biosynthetic pathway for UDP-N-acetylglucosamine (UDP-GlcNAc). The C-terminal domain catalyzes the transfer of acetyl group from acetyl coenzyme A to glucosamine-1-phosphate (GlcN-1-P) to produce N-acetylglucosamine-1-phosphate (GlcNAc-1-P), which is converted into UDP-GlcNAc by the transfer of uridine 5-monophosphate (from uridine 5-triphosphate), a reaction catalyzed by the N-terminal domain. This Deinococcus geothermalis (strain DSM 11300 / CIP 105573 / AG-3a) protein is Bifunctional protein GlmU.